The primary structure comprises 424 residues: CinA-like protein (424 aa).

It belongs to the CinA family.

The sequence is that of CinA-like protein from Shewanella denitrificans (strain OS217 / ATCC BAA-1090 / DSM 15013).